Reading from the N-terminus, the 614-residue chain is Glucosidase 2 subunit beta (614 aa).

Positions 1 to 20 (MGLHTLLLLLLLRISASAAA) are cleaved as a signal peptide. N-linked (GlcNAc...) asparagine glycosylation occurs at Asn115. Basic and acidic residues-rich tracts occupy residues 194-222 (EEER…KKAS), 231-272 (QENH…HDPE), and 324-351 (TGEK…HSEE). The interval 194 to 396 (EEERLRKEKE…SHESDDEYVD (203 aa)) is disordered. The segment covering 352–364 (THEDESDVPESAE) has biased composition (acidic residues). Residues 372-382 (SEVEDDRHKYD) show a composition bias toward basic and acidic residues. A compositionally biased stretch (acidic residues) spans 383–396 (DEDFSHESDDEYVD). The 96-residue stretch at 497-592 (DQCFESKEGK…VLSTPALCDE (96 aa)) folds into the MRH domain. Cystine bridges form between Cys499–Cys512, Cys549–Cys578, and Cys563–Cys590.

In terms of assembly, heterodimer of a catalytic alpha subunit and a beta subunit.

It is found in the endoplasmic reticulum. It functions in the pathway glycan metabolism; N-glycan metabolism. In terms of biological role, regulatory subunit of glucosidase II. May be required for defense response elicited by pathogen-associated molecular patterns (PAMPs). This Oryza sativa subsp. indica (Rice) protein is Glucosidase 2 subunit beta.